The chain runs to 219 residues: Segregation and condensation protein B (219 aa).

The disordered stretch occupies residues 193–219 (SLFAGGEEPSAEAADGGAGESTHGEEE). Positions 196–207 (AGGEEPSAEAAD) are enriched in low complexity.

Belongs to the ScpB family. Homodimer. Homodimerization may be required to stabilize the binding of ScpA to the Smc head domains. Component of a cohesin-like complex composed of ScpA, ScpB and the Smc homodimer, in which ScpA and ScpB bind to the head domain of Smc. The presence of the three proteins is required for the association of the complex with DNA.

Its subcellular location is the cytoplasm. Functionally, participates in chromosomal partition during cell division. May act via the formation of a condensin-like complex containing Smc and ScpA that pull DNA away from mid-cell into both cell halves. The polypeptide is Segregation and condensation protein B (Symbiobacterium thermophilum (strain DSM 24528 / JCM 14929 / IAM 14863 / T)).